The chain runs to 218 residues: Grancalcin (218 aa).

4 EF-hand domains span residues 49-84 (SSAGDSVYTYFSAVAGQDGEVDAEELQRCLTQSGIS), 85-119 (GTYSPFSLETCRIMIAMLDRDYTGKMGFNAFKELW), 120-155 (SALNAWKENFMTVDQDGSGTVEHHELRQAIGLMGYR), and 156-191 (LSPQTLTTIVKRYSKNGRIFFDDYVACCVKLRALTD). 9 residues coordinate Ca(2+): Asp103, Asp105, Thr107, Lys109, Asp133, Asp135, Ser137, Thr139, and Glu144.

As to quaternary structure, homodimer. Interacts with SRI and LCP1.

The protein localises to the cytoplasm. Its subcellular location is the cytoplasmic granule membrane. In terms of biological role, calcium-binding protein that may play a role in the adhesion of neutrophils to fibronectin. May play a role in the formation of focal adhesions. In Pongo abelii (Sumatran orangutan), this protein is Grancalcin (GCA).